A 315-amino-acid polypeptide reads, in one-letter code: ATP synthase gamma chain (315 aa).

Belongs to the ATPase gamma chain family. As to quaternary structure, F-type ATPases have 2 components, CF(1) - the catalytic core - and CF(0) - the membrane proton channel. CF(1) has five subunits: alpha(3), beta(3), gamma(1), delta(1), epsilon(1). CF(0) has three main subunits: a, b and c.

The protein localises to the cellular thylakoid membrane. Its function is as follows. Produces ATP from ADP in the presence of a proton gradient across the membrane. The gamma chain is believed to be important in regulating ATPase activity and the flow of protons through the CF(0) complex. The polypeptide is ATP synthase gamma chain (Synechococcus sp. (strain PCC 6716)).